A 328-amino-acid chain; its full sequence is 4-hydroxythreonine-4-phosphate dehydrogenase (328 aa).

Substrate contacts are provided by His134 and Thr135. Positions 164, 209, and 265 each coordinate a divalent metal cation. Positions 273, 282, and 291 each coordinate substrate.

The protein belongs to the PdxA family. In terms of assembly, homodimer. Zn(2+) is required as a cofactor. Mg(2+) serves as cofactor. It depends on Co(2+) as a cofactor.

The protein localises to the cytoplasm. The catalysed reaction is 4-(phosphooxy)-L-threonine + NAD(+) = 3-amino-2-oxopropyl phosphate + CO2 + NADH. Its pathway is cofactor biosynthesis; pyridoxine 5'-phosphate biosynthesis; pyridoxine 5'-phosphate from D-erythrose 4-phosphate: step 4/5. Catalyzes the NAD(P)-dependent oxidation of 4-(phosphooxy)-L-threonine (HTP) into 2-amino-3-oxo-4-(phosphooxy)butyric acid which spontaneously decarboxylates to form 3-amino-2-oxopropyl phosphate (AHAP). This is 4-hydroxythreonine-4-phosphate dehydrogenase from Vibrio vulnificus (strain YJ016).